The primary structure comprises 522 residues: MSEILEDAIKSKAWPFEEAKKILDSLNGKTPEKGYVLFETGYGPSGLPHIGTFGENARMVMVQKAFEQLSNIKTKLICFSDDMDGLRKVPSNIPNPEMVAGYMDMPLTSIPDPFGECESYGHYMNAKLRSFLDKFGFEYEFYSSTEMYKAGMFDEMLIRVLEKYDEIMELMLPTFREERKATYSPFMPICPKTGKVLQVPIHKWDAKLGTITYKDENGETIEVPVTKGHCKLQWKPDFSMRWAALKVDYEMYGKDHLANGRLYSEICRILGGKPPVQLCYELFLDENGEKISKSKGNSISVDDWLKYAPVESMALFMYQNPTRAKRLFFDVIPKNVDEYITFNQKYHLEEDRTKRFANPVYHIHHGNVPKIETFGITYSLLLNLTSVCNPSDKSVLWGFISRYEPKAMPNNSPYLDHLAEFAIRYYNDFVKAHKSYLAPSEKHKAILQDILDMLKGLPEQIEAESIQKGIYDIGMKAGYENLRDYFKDLYQILLGQSDGPRLGTFIKLYGISETMKLIEEKL.

A 'HIGH' region motif is present at residues 44–52 (PSGLPHIGT). The 'KMSKS' region signature appears at 290–294 (KISKS). Lys-293 lines the ATP pocket.

It belongs to the class-I aminoacyl-tRNA synthetase family.

The protein resides in the cytoplasm. The enzyme catalyses tRNA(Lys) + L-lysine + ATP = L-lysyl-tRNA(Lys) + AMP + diphosphate. This is Lysine--tRNA ligase from Rickettsia bellii (strain OSU 85-389).